Consider the following 565-residue polypeptide: Ubiquitin carboxyl-terminal hydrolase 21 (565 aa).

Residues 1–14 (MPQASEHRLGRTRE) show a composition bias toward basic and acidic residues. Residues 1 to 103 (MPQASEHRLG…PPPTVALPLP (103 aa)) are disordered. The segment covering 48–57 (MLRPLPPRPG) has biased composition (pro residues). Over residues 58-70 (LPDERLKKLELGR) the composition is skewed to basic and acidic residues. Positions 134–152 (ELGAALSRLALRPEPPTLR) match the Nuclear export signal motif. The 347-residue stretch at 212 to 558 (VGLRNLGNTC…EGYVLFYQLM (347 aa)) folds into the USP domain. The active-site Nucleophile is the cysteine 221. 4 residues coordinate Zn(2+): cysteine 384, cysteine 387, cysteine 437, and cysteine 440. Histidine 518 serves as the catalytic Proton acceptor.

The protein belongs to the peptidase C19 family. USP21 subfamily. As to quaternary structure, interacts with BEND3. Highly expressed in heart, pancreas and skeletal muscle. Also expressed in brain, placenta, liver and kidney, and at very low level in lung.

It localises to the cytoplasm. The protein resides in the nucleus. The catalysed reaction is Thiol-dependent hydrolysis of ester, thioester, amide, peptide and isopeptide bonds formed by the C-terminal Gly of ubiquitin (a 76-residue protein attached to proteins as an intracellular targeting signal).. Its function is as follows. Deubiquitinates histone H2A, a specific tag for epigenetic transcriptional repression, thereby acting as a coactivator. Deubiquitination of histone H2A releaves the repression of di- and trimethylation of histone H3 at 'Lys-4', resulting in regulation of transcriptional initiation. Regulates gene expression via histone H2A deubiquitination. Deubiquitinates BAZ2A/TIP5 leading to its stabilization. Also capable of removing NEDD8 from NEDD8 conjugates but has no effect on Sentrin-1 conjugates. Also acts as a negative regulator of the ribosome quality control (RQC) by mediating deubiquitination of 40S ribosomal proteins RPS10/eS10 and RPS20/uS10, thereby antagonizing ZNF598-mediated 40S ubiquitination. The protein is Ubiquitin carboxyl-terminal hydrolase 21 of Homo sapiens (Human).